The primary structure comprises 361 residues: Adenosine kinase (361 aa).

The short motif at 7–15 is the Nuclear localization signal element; the sequence is PKPKKLKVE. Residue Asp34 coordinates adenosine. Ser48 contributes to the Mg(2+) binding site. Tyr76 carries the post-translational modification Phosphotyrosine. 2 residues coordinate Mg(2+): Asp146 and Asn147. Gln305 lines the adenosine pocket. The active site involves Asp316. Asp316 functions as the Proton acceptor in the catalytic mechanism.

It belongs to the carbohydrate kinase PfkB family. In terms of assembly, monomer. Requires Mg(2+) as cofactor. The N-terminus is blocked.

Its subcellular location is the nucleus. The catalysed reaction is adenosine + ATP = AMP + ADP + H(+). It participates in purine metabolism; AMP biosynthesis via salvage pathway; AMP from adenosine: step 1/1. Its activity is regulated as follows. Activity is inhibited by 5-iodotubercidin and 5'-amino-5'-deoxyadenosine. In terms of biological role, catalyzes the phosphorylation of the purine nucleoside adenosine at the 5' position in an ATP-dependent manner. Serves as a potential regulator of concentrations of extracellular adenosine and intracellular adenine nucleotides. This is Adenosine kinase (ADK) from Cricetulus griseus (Chinese hamster).